A 469-amino-acid polypeptide reads, in one-letter code: MVALTDPDLLFPPEAHSRSLARDLYAGIKDLPIVSPHGHTDPRWYALNEPFPDPAQLLIVPDHYIFRMLFSQGVRLEDLGVASLDGAPVETDGRTIWRRFAEHYYLFRGTPTRLWFDHVLAHLFGIEEPLDATTADRHYDTIATVLQWENFRPRALFERFNIEVIATTEGALDDLEWHKMIRDSGWEGRVVTAYRPDAVVDPDFEGFSANLDRLGEITGCDTGSWAGYLDAHRQRRAFFKSFGATSSDHGHPTAETANLSDAAAQELFNRIRRGSQDERERKLFRAQMLTEMAKMSRDDGLVLQIHPGSWRNHSPSVFQRFGRDKGFDIPTRTDYVTALKPLLDCVGLERDLTVILFTLDESSYARELAPLAGVYPALKLGPAWWFHDSPEGMRRFREMTTETAGFYNTVGFNDDTRAFPSIPARHDVARRVDCAFLARLVAEHRLREDEAHELARELAHTLAKKAYRL.

Belongs to the metallo-dependent hydrolases superfamily. Uronate isomerase family.

It carries out the reaction D-glucuronate = D-fructuronate. It catalyses the reaction aldehydo-D-galacturonate = keto-D-tagaturonate. It participates in carbohydrate metabolism; pentose and glucuronate interconversion. This chain is Uronate isomerase, found in Mesorhizobium japonicum (strain LMG 29417 / CECT 9101 / MAFF 303099) (Mesorhizobium loti (strain MAFF 303099)).